Reading from the N-terminus, the 339-residue chain is 1-aminocyclopropane-1-carboxylate deaminase (339 aa).

An N6-(pyridoxal phosphate)lysine modification is found at K52. S79 functions as the Nucleophile in the catalytic mechanism.

Belongs to the ACC deaminase/D-cysteine desulfhydrase family. Homotrimer. Requires pyridoxal 5'-phosphate as cofactor.

It carries out the reaction 1-aminocyclopropane-1-carboxylate + H2O = 2-oxobutanoate + NH4(+). Its function is as follows. Catalyzes a cyclopropane ring-opening reaction, the irreversible conversion of 1-aminocyclopropane-1-carboxylate (ACC) to ammonia and alpha-ketobutyrate. Allows growth on ACC as a nitrogen source. In Bradyrhizobium sp. (strain ORS 278), this protein is 1-aminocyclopropane-1-carboxylate deaminase.